Consider the following 226-residue polypeptide: uncharacterized protein (226 aa).

The region spanning 168–226 is the HTH cro/C1-type domain; sequence ISALRNKLGLTQTDLGKRINVDANVIRNIETGDLVAFNVQDPMVRSLAYALGIRTIKYQ. A DNA-binding region (H-T-H motif) is located at residues 179 to 198; the sequence is QTDLGKRINVDANVIRNIET.

This is an uncharacterized protein from Acanthamoeba polyphaga mimivirus (APMV).